A 338-amino-acid chain; its full sequence is 4-hydroxythreonine-4-phosphate dehydrogenase (338 aa).

H139 and T140 together coordinate substrate. The a divalent metal cation site is built by H169, H214, and H270. Residues K278, N287, and R296 each coordinate substrate.

The protein belongs to the PdxA family. In terms of assembly, homodimer. Requires Zn(2+) as cofactor. The cofactor is Mg(2+). Co(2+) is required as a cofactor.

It localises to the cytoplasm. It catalyses the reaction 4-(phosphooxy)-L-threonine + NAD(+) = 3-amino-2-oxopropyl phosphate + CO2 + NADH. The protein operates within cofactor biosynthesis; pyridoxine 5'-phosphate biosynthesis; pyridoxine 5'-phosphate from D-erythrose 4-phosphate: step 4/5. Functionally, catalyzes the NAD(P)-dependent oxidation of 4-(phosphooxy)-L-threonine (HTP) into 2-amino-3-oxo-4-(phosphooxy)butyric acid which spontaneously decarboxylates to form 3-amino-2-oxopropyl phosphate (AHAP). This is 4-hydroxythreonine-4-phosphate dehydrogenase from Desulfosudis oleivorans (strain DSM 6200 / JCM 39069 / Hxd3) (Desulfococcus oleovorans).